Reading from the N-terminus, the 200-residue chain is Small ribosomal subunit protein uS4 (200 aa).

In terms of domain architecture, S4 RNA-binding spans 92–155 (SRLDAVVYSL…QNLDIIKESV (64 aa)).

The protein belongs to the universal ribosomal protein uS4 family. As to quaternary structure, part of the 30S ribosomal subunit. Contacts protein S5. The interaction surface between S4 and S5 is involved in control of translational fidelity.

One of the primary rRNA binding proteins, it binds directly to 16S rRNA where it nucleates assembly of the body of the 30S subunit. Its function is as follows. With S5 and S12 plays an important role in translational accuracy. The chain is Small ribosomal subunit protein uS4 from Staphylococcus haemolyticus (strain JCSC1435).